A 144-amino-acid polypeptide reads, in one-letter code: uncharacterized protein (144 aa).

4 helical membrane-spanning segments follow: residues 16 to 36 (FLIF…GAIF), 48 to 68 (GFIV…ALII), 87 to 107 (LLPE…LVLL), and 120 to 140 (VMSL…WYFG).

Its subcellular location is the cell membrane. This is an uncharacterized protein from Methanocaldococcus jannaschii (strain ATCC 43067 / DSM 2661 / JAL-1 / JCM 10045 / NBRC 100440) (Methanococcus jannaschii).